Consider the following 277-residue polypeptide: Phosphatidylglycerol--prolipoprotein diacylglyceryl transferase (277 aa).

The next 4 membrane-spanning stretches (helical) occupy residues 22-42 (WYGV…LSEA), 51-71 (IIVD…RIYY), 89-109 (IWHG…TAII), and 116-136 (ISFW…QAIG). Residue arginine 137 coordinates a 1,2-diacyl-sn-glycero-3-phospho-(1'-sn-glycerol). Helical transmembrane passes span 177-197 (QPTF…LLII), 205-225 (GELF…IEGM), and 235-255 (FRVS…LIIY).

The protein belongs to the Lgt family.

The protein localises to the cell membrane. It carries out the reaction L-cysteinyl-[prolipoprotein] + a 1,2-diacyl-sn-glycero-3-phospho-(1'-sn-glycerol) = an S-1,2-diacyl-sn-glyceryl-L-cysteinyl-[prolipoprotein] + sn-glycerol 1-phosphate + H(+). The protein operates within protein modification; lipoprotein biosynthesis (diacylglyceryl transfer). Catalyzes the transfer of the diacylglyceryl group from phosphatidylglycerol to the sulfhydryl group of the N-terminal cysteine of a prolipoprotein, the first step in the formation of mature lipoproteins. This is Phosphatidylglycerol--prolipoprotein diacylglyceryl transferase from Listeria welshimeri serovar 6b (strain ATCC 35897 / DSM 20650 / CCUG 15529 / CIP 8149 / NCTC 11857 / SLCC 5334 / V8).